A 321-amino-acid chain; its full sequence is G-protein coupled receptor aex-2 (321 aa).

Topologically, residues Met1–Ala24 are extracellular. 3 N-linked (GlcNAc...) asparagine glycosylation sites follow: Asn2, Asn9, and Asn17. The helical transmembrane segment at Phe25–Leu45 threads the bilayer. At Thr46 to Arg55 the chain is on the cytoplasmic side. The chain crosses the membrane as a helical span at residues Gln56–Thr76. The Extracellular segment spans residues Arg77 to Pro90. Residues Cys88 and Cys161 are joined by a disulfide bond. A helical transmembrane segment spans residues Tyr91–Val111. Topologically, residues Asp112–Leu132 are cytoplasmic. The chain crosses the membrane as a helical span at residues Leu133–Phe153. Residues Leu154–Pro175 lie on the Extracellular side of the membrane. A helical membrane pass occupies residues Ile176–Ala196. Over His197–Thr221 the chain is Cytoplasmic. Residues Leu222–Gly242 traverse the membrane as a helical segment. Residues Glu243–Ala254 are Extracellular-facing. Residues Thr255–Trp275 form a helical membrane-spanning segment. Residues Thr276 to Met321 lie on the Cytoplasmic side of the membrane.

The protein belongs to the G-protein coupled receptor 1 family. In terms of tissue distribution, expressed in the intestinal muscle, anal depressor, AVL and DVB GABAergic neurons, enteric muscles, the nerve ring, the ventral nerve cord and head mesodermal cells.

It is found in the cell membrane. The protein resides in the cell projection. Its subcellular location is the cilium. G-protein coupled receptor for the nlp-40 neuropeptide. The activity of this receptor is mediated by G proteins which activate adenylyl cyclase. Plays a role in the defecation motor program, which is a coordinated series of three muscle contractions that occurs every 45 seconds. Specifically, acts in GABAergic neurons, such as AVL and DVB, to control the expulsion step of defecation. Required for fatty acid uptake and metabolism by intestinal cells and therefore regulates the levels of triglycerides in the intestine. This is G-protein coupled receptor aex-2 from Caenorhabditis elegans.